The chain runs to 81 residues: Three-finger toxin A1 (81 aa).

A signal peptide spans 1 to 21 (MKTLLLTLVVVTIVCLDFGHT). Intrachain disulfides connect Cys24–Cys43, Cys38–Cys60, Cys62–Cys73, and Cys74–Cys79.

This sequence belongs to the three-finger toxin family. Short-chain subfamily. Type I alpha-neurotoxin sub-subfamily. As to expression, expressed by the venom gland.

The protein localises to the secreted. Binds and inhibits fetal (alpha-1-beta-1-gamma-delta/CHRNA1-CHRNB1-CHRNG-CHRND, IC(50)=1.4 nM), adult (alpha-1-beta-1-delta-epsilon/CHRNA1-CHRNB1-CHRND-CHRNE, IC(50)=12 nM) and neuronal alpha-7/CHRNA7 (IC(50)=400 nM) nicotinic acetylcholine receptors (nAChR) thereby impairing neuromuscular and neuronal transmissions. This Micrurus laticollaris (Balsas coral snake) protein is Three-finger toxin A1.